Reading from the N-terminus, the 268-residue chain is Tropinone reductase homolog At2g29150 (268 aa).

Position 22-46 (22-46) interacts with NADP(+); it reads LVTGGSKGLGEAVVEELAMLGARVH. Position 155 (Ser155) interacts with substrate. Tyr167 functions as the Proton acceptor in the catalytic mechanism.

It belongs to the short-chain dehydrogenases/reductases (SDR) family. SDR65C subfamily.

Enantiospecific reductase active on cyclic monoterpenes and small flexible lipophilic carbonyls. No activity with tropinone, nitrogen-containing tropinone analogs, tropine or pseudotropine as substrate. The chain is Tropinone reductase homolog At2g29150 from Arabidopsis thaliana (Mouse-ear cress).